Reading from the N-terminus, the 39-residue chain is Photosystem II reaction center protein J (39 aa).

The chain crosses the membrane as a helical span at residues I7–F27.

It belongs to the PsbJ family. As to quaternary structure, PSII is composed of 1 copy each of membrane proteins PsbA, PsbB, PsbC, PsbD, PsbE, PsbF, PsbH, PsbI, PsbJ, PsbK, PsbL, PsbM, PsbT, PsbX, PsbY, PsbZ, Psb30/Ycf12, at least 3 peripheral proteins of the oxygen-evolving complex and a large number of cofactors. It forms dimeric complexes.

The protein resides in the plastid. It localises to the chloroplast thylakoid membrane. Its function is as follows. One of the components of the core complex of photosystem II (PSII). PSII is a light-driven water:plastoquinone oxidoreductase that uses light energy to abstract electrons from H(2)O, generating O(2) and a proton gradient subsequently used for ATP formation. It consists of a core antenna complex that captures photons, and an electron transfer chain that converts photonic excitation into a charge separation. In Rhodomonas salina (Cryptomonas salina), this protein is Photosystem II reaction center protein J.